An 89-amino-acid chain; its full sequence is Small ribosomal subunit protein uS15 (89 aa).

It belongs to the universal ribosomal protein uS15 family. In terms of assembly, part of the 30S ribosomal subunit. Forms a bridge to the 50S subunit in the 70S ribosome, contacting the 23S rRNA.

One of the primary rRNA binding proteins, it binds directly to 16S rRNA where it helps nucleate assembly of the platform of the 30S subunit by binding and bridging several RNA helices of the 16S rRNA. Its function is as follows. Forms an intersubunit bridge (bridge B4) with the 23S rRNA of the 50S subunit in the ribosome. This chain is Small ribosomal subunit protein uS15, found in Methylorubrum populi (strain ATCC BAA-705 / NCIMB 13946 / BJ001) (Methylobacterium populi).